A 48-amino-acid chain; its full sequence is Fimbrial assembly protein, serogroup A1 (48 aa).

The polypeptide is Fimbrial assembly protein, serogroup A1 (fimB) (Dichelobacter nodosus (Bacteroides nodosus)).